Reading from the N-terminus, the 259-residue chain is uncharacterized protein (259 aa).

Residues 1 to 19 (MKLSVKIAGVLTVAAAAMT) constitute a signal peptide (or 26). 214–221 (GPYELGKT) contacts ATP.

This is an uncharacterized protein from Bacillus subtilis (strain 168).